We begin with the raw amino-acid sequence, 86 residues long: Toxin CngtIV (86 aa).

Residues 1–19 form the signal peptide; the sequence is MNSLLIITACLVLIGTVWA. In terms of domain architecture, LCN-type CS-alpha/beta spans 20–84; it reads KDGYLVDVKG…TWPLPNKRCG (65 aa). Intrachain disulfides connect Cys30–Cys83, Cys34–Cys59, Cys43–Cys64, and Cys47–Cys66.

Belongs to the long (4 C-C) scorpion toxin superfamily. Sodium channel inhibitor family. Beta subfamily. As to expression, expressed by the venom gland.

Its subcellular location is the secreted. Its function is as follows. Beta toxins bind voltage-independently at site-4 of sodium channels (Nav) and shift the voltage of activation toward more negative potentials thereby affecting sodium channel activation and promoting spontaneous and repetitive firing. The chain is Toxin CngtIV from Centruroides noxius (Mexican scorpion).